We begin with the raw amino-acid sequence, 103 residues long: Large ribosomal subunit protein uL24 (103 aa).

The protein belongs to the universal ribosomal protein uL24 family. Part of the 50S ribosomal subunit.

Its function is as follows. One of two assembly initiator proteins, it binds directly to the 5'-end of the 23S rRNA, where it nucleates assembly of the 50S subunit. Functionally, one of the proteins that surrounds the polypeptide exit tunnel on the outside of the subunit. This is Large ribosomal subunit protein uL24 from Vesicomyosocius okutanii subsp. Calyptogena okutanii (strain HA).